The chain runs to 338 residues: Glyceraldehyde-3-phosphate dehydrogenase 2 (338 aa).

Residues 13 to 14, Asp35, and Arg80 contribute to the NAD(+) site; that span reads RI. D-glyceraldehyde 3-phosphate contacts are provided by residues 151–153, Thr182, 211–212, and Arg234; these read SCT and TG. Cys152 functions as the Nucleophile in the catalytic mechanism. Asn316 serves as a coordination point for NAD(+).

The protein belongs to the glyceraldehyde-3-phosphate dehydrogenase family. As to quaternary structure, homotetramer.

The protein localises to the cytoplasm. It carries out the reaction D-glyceraldehyde 3-phosphate + phosphate + NAD(+) = (2R)-3-phospho-glyceroyl phosphate + NADH + H(+). Its pathway is carbohydrate degradation; glycolysis; pyruvate from D-glyceraldehyde 3-phosphate: step 1/5. With respect to regulation, inhibited by koningic acid through the interaction of cysteine residues with koningic acid even at very low concentrations. The polypeptide is Glyceraldehyde-3-phosphate dehydrogenase 2 (gpd2) (Trichoderma koningii (Hypocrea koningii)).